We begin with the raw amino-acid sequence, 251 residues long: Flap endonuclease Xni (251 aa).

Position 104 (aspartate 104) interacts with Mg(2+). Residues 160 to 249 (VLPQQLPDYW…IDGNLQQLRL (90 aa)) enclose the 5'-3' exonuclease domain. Residues leucine 171, alanine 172, proline 180, valine 182, and isoleucine 185 each coordinate K(+). Positions 184-189 (GIGPKS) are interaction with DNA.

This sequence belongs to the Xni family. Mg(2+) serves as cofactor. It depends on K(+) as a cofactor.

Its function is as follows. Has flap endonuclease activity. During DNA replication, flap endonucleases cleave the 5'-overhanging flap structure that is generated by displacement synthesis when DNA polymerase encounters the 5'-end of a downstream Okazaki fragment. The polypeptide is Flap endonuclease Xni (Citrobacter koseri (strain ATCC BAA-895 / CDC 4225-83 / SGSC4696)).